A 27-amino-acid chain; its full sequence is GFLGPLLKLAAKGVAKVIPHLIPSRQQ.

As to expression, expressed by the skin glands.

The protein localises to the secreted. Its function is as follows. Has very weak antimicrobial activity against Gram-positive bacterium S.aureus and Gram-negative bacterium E.coli and stronger activity against yeast C.albicans. Enhances the antibacterial activity of XT3. Has hemolytic activity against human red blood cells. The chain is Antimicrobial peptide 1 from Xenopus tropicalis (Western clawed frog).